The chain runs to 152 residues: Proteolipid protein 2 (152 aa).

N18 carries an N-linked (GlcNAc...) asparagine glycan. An MARVEL domain is found at 19-137 (FSRTRKGILL…DAYVTFPVRQ (119 aa)). Helical transmembrane passes span 25–45 (GILL…FSAS), 48–68 (GYSS…VVYM), and 85–105 (FFRT…VLVE). An N-linked (GlcNAc...) asparagine glycan is attached at N108. The chain crosses the membrane as a helical span at residues 112–132 (IVAGVLGLIATCLFGYDAYVT).

Enriched in colonic mucosa. The expression of A4 follows a gradient along the crypto-villus axis with the most abundant message occurring in the lower half of the crypt.

Its subcellular location is the membrane. May play a role in cell differentiation in the intestinal epithelium. In Homo sapiens (Human), this protein is Proteolipid protein 2 (PLP2).